Consider the following 104-residue polypeptide: Gastrin (104 aa).

Residues 1–21 form the signal peptide; that stretch reads MQRLCAHALILVLALAAFCEA. Residues 22-58 constitute a propeptide that is removed on maturation; that stretch reads SWKPHSQLQDAPVAPGANKGQEPLRMDRLGPASHPRR. Positions 26–70 are disordered; that stretch reads HSQLQDAPVAPGANKGQEPLRMDRLGPASHPRRQLGLQDPPHMVA. Y87 bears the Sulfotyrosine mark. F92 is modified (phenylalanine amide). S96 carries the post-translational modification Phosphoserine. Residues 96-104 constitute a propeptide that is removed on maturation; sequence SAEEGDQHP.

The protein belongs to the gastrin/cholecystokinin family. In terms of processing, sulfation enhances proteolytic processing, and blocks peptide degradation. Levels of sulfation differ between proteolytically-cleaved gastrins and between tissues.

Its subcellular location is the secreted. Its function is as follows. Gastrin stimulates the stomach mucosa to produce and secrete hydrochloric acid and the pancreas to secrete its digestive enzymes. It also stimulates smooth muscle contraction and increases blood circulation and water secretion in the stomach and intestine. The polypeptide is Gastrin (GAST) (Ovis aries (Sheep)).